The primary structure comprises 349 residues: Selenide, water dikinase (349 aa).

Residue cysteine 17 is part of the active site. Residues lysine 20 and 48 to 50 (YFD) contribute to the ATP site. Aspartate 51 lines the Mg(2+) pocket. ATP is bound by residues aspartate 68, aspartate 91, and 139 to 141 (GHS). Aspartate 91 is a Mg(2+) binding site. Aspartate 229 lines the Mg(2+) pocket.

The protein belongs to the selenophosphate synthase 1 family. Class I subfamily. As to quaternary structure, homodimer. Requires Mg(2+) as cofactor.

The catalysed reaction is hydrogenselenide + ATP + H2O = selenophosphate + AMP + phosphate + 2 H(+). Synthesizes selenophosphate from selenide and ATP. The polypeptide is Selenide, water dikinase (Nitrosomonas eutropha (strain DSM 101675 / C91 / Nm57)).